Reading from the N-terminus, the 271-residue chain is Malonyl-[acyl-carrier protein] O-methyltransferase (271 aa).

Belongs to the methyltransferase superfamily.

The catalysed reaction is malonyl-[ACP] + S-adenosyl-L-methionine = malonyl-[ACP] methyl ester + S-adenosyl-L-homocysteine. Its pathway is cofactor biosynthesis; biotin biosynthesis. Converts the free carboxyl group of a malonyl-thioester to its methyl ester by transfer of a methyl group from S-adenosyl-L-methionine (SAM). It allows to synthesize pimeloyl-ACP via the fatty acid synthetic pathway. The sequence is that of Malonyl-[acyl-carrier protein] O-methyltransferase from Halalkalibacterium halodurans (strain ATCC BAA-125 / DSM 18197 / FERM 7344 / JCM 9153 / C-125) (Bacillus halodurans).